The chain runs to 417 residues: Imidazolonepropionase (417 aa).

Positions 80 and 82 each coordinate Fe(3+). Zn(2+)-binding residues include histidine 80 and histidine 82. Residues arginine 89, tyrosine 152, and histidine 187 each coordinate 4-imidazolone-5-propanoate. Tyrosine 152 lines the N-formimidoyl-L-glutamate pocket. Histidine 252 is a Fe(3+) binding site. Zn(2+) is bound at residue histidine 252. Glutamate 255 lines the 4-imidazolone-5-propanoate pocket. Aspartate 326 contacts Fe(3+). Aspartate 326 contacts Zn(2+). N-formimidoyl-L-glutamate is bound by residues asparagine 328 and glycine 330. Position 331 (serine 331) interacts with 4-imidazolone-5-propanoate.

Belongs to the metallo-dependent hydrolases superfamily. HutI family. Requires Zn(2+) as cofactor. It depends on Fe(3+) as a cofactor.

It is found in the cytoplasm. The catalysed reaction is 4-imidazolone-5-propanoate + H2O = N-formimidoyl-L-glutamate. The protein operates within amino-acid degradation; L-histidine degradation into L-glutamate; N-formimidoyl-L-glutamate from L-histidine: step 3/3. In terms of biological role, catalyzes the hydrolytic cleavage of the carbon-nitrogen bond in imidazolone-5-propanoate to yield N-formimidoyl-L-glutamate. It is the third step in the universal histidine degradation pathway. This Bacteroides fragilis (strain YCH46) protein is Imidazolonepropionase.